A 205-amino-acid chain; its full sequence is Ribonuclease HII (205 aa).

Positions 1-205 constitute an RNase H type-2 domain; that stretch reads MLVCGVDEAG…RPARLIEAGG (205 aa). 3 residues coordinate a divalent metal cation: Asp-7, Glu-8, and Asp-105.

This sequence belongs to the RNase HII family. Requires Mn(2+) as cofactor. Mg(2+) is required as a cofactor.

Its subcellular location is the cytoplasm. The enzyme catalyses Endonucleolytic cleavage to 5'-phosphomonoester.. In terms of biological role, endonuclease that specifically degrades the RNA of RNA-DNA hybrids. This chain is Ribonuclease HII, found in Cenarchaeum symbiosum (strain A).